The sequence spans 327 residues: BarH-like 1 homeobox protein (327 aa).

Disordered stretches follow at residues 1–90 (MEGS…AQSR), 112–184 (APYS…ARTA), and 305–327 (GASE…AQPR). Residues 33-54 (RSPLELSPRSESSSDCSSPASP) show a composition bias toward low complexity. A compositionally biased stretch (polar residues) spans 79 to 90 (QPGQLSAPAQSR). Basic and acidic residues-rich tracts occupy residues 133–143 (AAEDFRDKLDK) and 152–166 (SEYK…EISS). The segment at residues 178–237 (PRKARTAFTDHQLAQLERSFERQKYLSVQDRMELAASLNLTDTQVKTWYQNRRTKWKRQT) is a DNA-binding region (homeobox). The segment covering 316–327 (LAGVLPRAAQPR) has biased composition (low complexity).

The protein belongs to the BAR homeobox family.

Its subcellular location is the nucleus. The protein is BarH-like 1 homeobox protein (BARHL1) of Homo sapiens (Human).